Here is a 257-residue protein sequence, read N- to C-terminus: Outer membrane protein YaiO (257 aa).

A signal peptide spans 1–19 (MIKRTLLAAAIFSALPAYA).

It localises to the cell outer membrane. The polypeptide is Outer membrane protein YaiO (yaiO) (Escherichia coli (strain K12)).